Consider the following 286-residue polypeptide: Structure-specific endonuclease subunit SLX1 (286 aa).

A GIY-YIG domain is found at 15–98 (SFYGVYILKS…QHAYQTRHIN (84 aa)).

The protein belongs to the SLX1 family. Forms a heterodimer with SLX4. It depends on a divalent metal cation as a cofactor.

The protein localises to the nucleus. In terms of biological role, catalytic subunit of the SLX1-SLX4 structure-specific endonuclease that resolves DNA secondary structures generated during DNA repair and recombination. Has endonuclease activity towards branched DNA substrates, introducing single-strand cuts in duplex DNA close to junctions with ss-DNA. This Candida dubliniensis (strain CD36 / ATCC MYA-646 / CBS 7987 / NCPF 3949 / NRRL Y-17841) (Yeast) protein is Structure-specific endonuclease subunit SLX1.